A 177-amino-acid polypeptide reads, in one-letter code: ATP synthase subunit delta (177 aa).

It belongs to the ATPase delta chain family. As to quaternary structure, F-type ATPases have 2 components, F(1) - the catalytic core - and F(0) - the membrane proton channel. F(1) has five subunits: alpha(3), beta(3), gamma(1), delta(1), epsilon(1). F(0) has three main subunits: a(1), b(2) and c(10-14). The alpha and beta chains form an alternating ring which encloses part of the gamma chain. F(1) is attached to F(0) by a central stalk formed by the gamma and epsilon chains, while a peripheral stalk is formed by the delta and b chains.

The protein resides in the cell inner membrane. F(1)F(0) ATP synthase produces ATP from ADP in the presence of a proton or sodium gradient. F-type ATPases consist of two structural domains, F(1) containing the extramembraneous catalytic core and F(0) containing the membrane proton channel, linked together by a central stalk and a peripheral stalk. During catalysis, ATP synthesis in the catalytic domain of F(1) is coupled via a rotary mechanism of the central stalk subunits to proton translocation. Its function is as follows. This protein is part of the stalk that links CF(0) to CF(1). It either transmits conformational changes from CF(0) to CF(1) or is implicated in proton conduction. This is ATP synthase subunit delta from Azobacteroides pseudotrichonymphae genomovar. CFP2.